Here is a 440-residue protein sequence, read N- to C-terminus: L-seryl-tRNA(Sec) selenium transferase (440 aa).

Position 282 is an N6-(pyridoxal phosphate)lysine (Lys282).

The protein belongs to the SelA family. Requires pyridoxal 5'-phosphate as cofactor.

Its subcellular location is the cytoplasm. The catalysed reaction is L-seryl-tRNA(Sec) + selenophosphate + H(+) = L-selenocysteinyl-tRNA(Sec) + phosphate. It participates in aminoacyl-tRNA biosynthesis; selenocysteinyl-tRNA(Sec) biosynthesis; selenocysteinyl-tRNA(Sec) from L-seryl-tRNA(Sec) (bacterial route): step 1/1. In terms of biological role, converts seryl-tRNA(Sec) to selenocysteinyl-tRNA(Sec) required for selenoprotein biosynthesis. The protein is L-seryl-tRNA(Sec) selenium transferase of Campylobacter jejuni (strain RM1221).